We begin with the raw amino-acid sequence, 208 residues long: Thymidylate kinase (208 aa).

Position 10-17 (10-17 (GGEGAGKS)) interacts with ATP.

Belongs to the thymidylate kinase family.

It catalyses the reaction dTMP + ATP = dTDP + ADP. In terms of biological role, phosphorylation of dTMP to form dTDP in both de novo and salvage pathways of dTTP synthesis. This Alcanivorax borkumensis (strain ATCC 700651 / DSM 11573 / NCIMB 13689 / SK2) protein is Thymidylate kinase.